Here is a 179-residue protein sequence, read N- to C-terminus: ATP synthase subunit delta (179 aa).

This sequence belongs to the ATPase delta chain family. F-type ATPases have 2 components, F(1) - the catalytic core - and F(0) - the membrane proton channel. F(1) has five subunits: alpha(3), beta(3), gamma(1), delta(1), epsilon(1). F(0) has three main subunits: a(1), b(2) and c(10-14). The alpha and beta chains form an alternating ring which encloses part of the gamma chain. F(1) is attached to F(0) by a central stalk formed by the gamma and epsilon chains, while a peripheral stalk is formed by the delta and b chains.

The protein localises to the cell membrane. Functionally, f(1)F(0) ATP synthase produces ATP from ADP in the presence of a proton or sodium gradient. F-type ATPases consist of two structural domains, F(1) containing the extramembraneous catalytic core and F(0) containing the membrane proton channel, linked together by a central stalk and a peripheral stalk. During catalysis, ATP synthesis in the catalytic domain of F(1) is coupled via a rotary mechanism of the central stalk subunits to proton translocation. Its function is as follows. This protein is part of the stalk that links CF(0) to CF(1). It either transmits conformational changes from CF(0) to CF(1) or is implicated in proton conduction. The polypeptide is ATP synthase subunit delta (Clostridium botulinum (strain Alaska E43 / Type E3)).